A 119-amino-acid chain; its full sequence is Small ribosomal subunit protein uS10 (119 aa).

Belongs to the universal ribosomal protein uS10 family. As to quaternary structure, component of the small ribosomal subunit. Mature ribosomes consist of a small (40S) and a large (60S) subunit. The 40S subunit contains about 32 different proteins and 1 molecule of RNA (18S). The 60S subunit contains 45 different proteins and 3 molecules of RNA (25S, 5.8S and 5S).

It is found in the cytoplasm. Component of the ribosome, a large ribonucleoprotein complex responsible for the synthesis of proteins in the cell. The small ribosomal subunit (SSU) binds messenger RNAs (mRNAs) and translates the encoded message by selecting cognate aminoacyl-transfer RNA (tRNA) molecules. The large subunit (LSU) contains the ribosomal catalytic site termed the peptidyl transferase center (PTC), which catalyzes the formation of peptide bonds, thereby polymerizing the amino acids delivered by tRNAs into a polypeptide chain. The nascent polypeptides leave the ribosome through a tunnel in the LSU and interact with protein factors that function in enzymatic processing, targeting, and the membrane insertion of nascent chains at the exit of the ribosomal tunnel. In Candida albicans (strain SC5314 / ATCC MYA-2876) (Yeast), this protein is Small ribosomal subunit protein uS10 (RPS20).